Here is a 773-residue protein sequence, read N- to C-terminus: E3 ubiquitin-protein ligase RFWD3 (773 aa).

Disordered regions lie at residues 18-67, 92-117, 139-230, and 259-279; these read VAEQ…SQVG, RVENINPGASEEHRQPSRVNRPIPVS, LRPP…EEVV, and GETLPKQSPQKTNPLLPSVSK. Ser47 is subject to Phosphoserine; by ATM and ATR. Residues 50–59 are compositionally biased toward low complexity; that stretch reads APPLLQPAPA. Ser64 bears the Phosphoserine; by ATM and ATR mark. Positions 151-164 are enriched in basic residues; the sequence is RSRRRRGSASRRSR. Positions 186–205 are enriched in polar residues; the sequence is VSRTQPHLPSMSQDSETRNP. The segment covering 207–221 has biased composition (low complexity); sequence SEDLQVSSSSSSDSE. A compositionally biased stretch (polar residues) spans 263–273; that stretch reads PKQSPQKTNPL. The segment at 287–331 adopts an RING-type; degenerate zinc-finger fold; that stretch reads CTICFEHWTNAGDHRLSALRCGHLFGYKCISKWLKGQARKCPQCN. Residues 361-403 are a coiled coil; sequence SLLKEQMLRKQAELESAQCRLQLQVLTDECSKLHSRVQDLQKL. 3 WD repeats span residues 494-536, 538-576, and 582-627; these read MHGK…QTYN, GRPVWSCCWCLDESNHIYAGLVNGSILVYDLRNTSSHIQ, and KARC…SHWP.

In terms of assembly, interacts with MDM2 and p53/TP53. Binds to the RPA complex via direct interaction with RPA2. Interacts with RAD51. Post-translationally, phosphorylated at Ser-46 and Ser-63 upon DNA damage by ATM or ATR. ATM phosphorylation occurs at early times upon DNA damage, while ATR is the major kinase at later times. Phosphorylation by ATM and ATR is required to stabilize p53/TP53. Part of the phosphorylation depends upon RPA2 presence.

It localises to the nucleus. The protein resides in the PML body. It is found in the cytoplasm. It carries out the reaction S-ubiquitinyl-[E2 ubiquitin-conjugating enzyme]-L-cysteine + [acceptor protein]-L-lysine = [E2 ubiquitin-conjugating enzyme]-L-cysteine + N(6)-ubiquitinyl-[acceptor protein]-L-lysine.. It participates in protein modification; protein ubiquitination. E3 ubiquitin-protein ligase required for the repair of DNA interstrand cross-links (ICL) in response to DNA damage. Plays a key role in RPA-mediated DNA damage signaling and repair. Acts by mediating ubiquitination of the RPA complex (RPA1, RPA2 and RPA3 subunits) and RAD51 at stalled replication forks, leading to remove them from DNA damage sites and promote homologous recombination. Also mediates the ubiquitination of p53/TP53 in the late response to DNA damage, and acts as a positive regulator of p53/TP53 stability, thereby regulating the G1/S DNA damage checkpoint. May act by catalyzing the formation of short polyubiquitin chains on p53/TP53 that are not targeted to the proteasome. In response to ionizing radiation, interacts with MDM2 and enhances p53/TP53 ubiquitination, possibly by restricting MDM2 from extending polyubiquitin chains on ubiquitinated p53/TP53. Required to translesion DNA synthesis across DNA-protein cross-link adducts by catalyzing ubiquitination of proteins on single-stranded DNA (ssDNA). The chain is E3 ubiquitin-protein ligase RFWD3 (RFWD3) from Ailuropoda melanoleuca (Giant panda).